We begin with the raw amino-acid sequence, 300 residues long: NAD kinase (300 aa).

Asp75 functions as the Proton acceptor in the catalytic mechanism. NAD(+) contacts are provided by residues 75–76 (DG), 149–150 (ND), Arg177, Asp179, 190–195 (TAYALS), Ala214, and Gln248.

The protein belongs to the NAD kinase family. The cofactor is a divalent metal cation.

The protein localises to the cytoplasm. It carries out the reaction NAD(+) + ATP = ADP + NADP(+) + H(+). Its function is as follows. Involved in the regulation of the intracellular balance of NAD and NADP, and is a key enzyme in the biosynthesis of NADP. Catalyzes specifically the phosphorylation on 2'-hydroxyl of the adenosine moiety of NAD to yield NADP. The protein is NAD kinase of Burkholderia pseudomallei (strain K96243).